The chain runs to 331 residues: 6-phosphogluconolactonase (331 aa).

This sequence belongs to the cycloisomerase 2 family.

It catalyses the reaction 6-phospho-D-glucono-1,5-lactone + H2O = 6-phospho-D-gluconate + H(+). The protein operates within carbohydrate degradation; pentose phosphate pathway; D-ribulose 5-phosphate from D-glucose 6-phosphate (oxidative stage): step 2/3. Its function is as follows. Catalyzes the hydrolysis of 6-phosphogluconolactone to 6-phosphogluconate. This Klebsiella pneumoniae subsp. pneumoniae (strain ATCC 700721 / MGH 78578) protein is 6-phosphogluconolactonase.